The sequence spans 603 residues: UvrABC system protein C (603 aa).

The 80-residue stretch at Ser-13 to Val-92 folds into the GIY-YIG domain. A UVR domain is found at Glu-205–Ala-240.

This sequence belongs to the UvrC family. As to quaternary structure, interacts with UvrB in an incision complex.

The protein localises to the cytoplasm. Its function is as follows. The UvrABC repair system catalyzes the recognition and processing of DNA lesions. UvrC both incises the 5' and 3' sides of the lesion. The N-terminal half is responsible for the 3' incision and the C-terminal half is responsible for the 5' incision. This is UvrABC system protein C from Chlamydia pneumoniae (Chlamydophila pneumoniae).